A 356-amino-acid chain; its full sequence is Peptide chain release factor 1 (356 aa).

An N5-methylglutamine modification is found at Gln233.

It belongs to the prokaryotic/mitochondrial release factor family. Post-translationally, methylated by PrmC. Methylation increases the termination efficiency of RF1.

It localises to the cytoplasm. Peptide chain release factor 1 directs the termination of translation in response to the peptide chain termination codons UAG and UAA. In Halalkalibacterium halodurans (strain ATCC BAA-125 / DSM 18197 / FERM 7344 / JCM 9153 / C-125) (Bacillus halodurans), this protein is Peptide chain release factor 1.